The chain runs to 396 residues: Phosphopentomutase (396 aa).

Residues D13, D288, H293, D329, H330, and H341 each contribute to the Mn(2+) site.

The protein belongs to the phosphopentomutase family. Mn(2+) serves as cofactor.

The protein resides in the cytoplasm. The catalysed reaction is 2-deoxy-alpha-D-ribose 1-phosphate = 2-deoxy-D-ribose 5-phosphate. It carries out the reaction alpha-D-ribose 1-phosphate = D-ribose 5-phosphate. It functions in the pathway carbohydrate degradation; 2-deoxy-D-ribose 1-phosphate degradation; D-glyceraldehyde 3-phosphate and acetaldehyde from 2-deoxy-alpha-D-ribose 1-phosphate: step 1/2. Isomerase that catalyzes the conversion of deoxy-ribose 1-phosphate (dRib-1-P) and ribose 1-phosphate (Rib-1-P) to deoxy-ribose 5-phosphate (dRib-5-P) and ribose 5-phosphate (Rib-5-P), respectively. This chain is Phosphopentomutase, found in Clostridium beijerinckii (strain ATCC 51743 / NCIMB 8052) (Clostridium acetobutylicum).